The sequence spans 415 residues: MQVTLKTLQQQTFKIDIDPEETVKALKEKIESEKGKDAFPVAGQKLIYAGKILSDDTALKEYKIDEKNFVVVMVTKPKAVTSAVPATTQQSSSPSTTTVSSSPAAAVAQAPAPTPALAPTSTPASTTPASTTASSEPAPTGATQPEKPAEKPAQTPVLTSPAPADSTPGDSSRSNLFEDATSALVTGQSYENMVTEIMSMGYEREQVIAALRASFNNPDRAVEYLLMGIPGDRESQAVVDPPPQAVSTGTPQSPAVAAAAATTTATTTTTSGGHPLEFLRNQPQFQQMRQIIQQNPSLLPALLQQIGRENPQLLQQISQHQEHFIQMLNEPVQEAGGQGGGGGGGGGGGGGGGGIAEAGSGHMNYIQVTPQEKEAIERLKALGFPEGLVIQAYFACEKNENLAANFLLQQNFDED.

A Ubiquitin-like domain is found at 1–79 (MQVTLKTLQQ…VVVMVTKPKA (79 aa)). Positions 80-175 (VTSAVPATTQ…STPGDSSRSN (96 aa)) are disordered. Positions 84-143 (VPATTQQSSSPSTTTVSSSPAAAVAQAPAPTPALAPTSTPASTTPASTTASSEPAPTGAT) are enriched in low complexity. The residue at position 155 (Thr-155) is a Phosphothreonine. 2 positions are modified to phosphoserine: Ser-160 and Ser-174. Thr-186 is modified (phosphothreonine). The UBA 1 domain occupies 188 to 228 (QSYENMVTEIMSMGYEREQVIAALRASFNNPDRAVEYLLMG). Ser-199 carries the phosphoserine modification. The residue at position 202 (Tyr-202) is a Phosphotyrosine. In terms of domain architecture, STI1 spans 274-317 (HPLEFLRNQPQFQQMRQIIQQNPSLLPALLQQIGRENPQLLQQI). The tract at residues 334–355 (EAGGQGGGGGGGGGGGGGGGGI) is disordered. The span at 336-355 (GGQGGGGGGGGGGGGGGGGI) shows a compositional bias: gly residues. The 41-residue stretch at 370-410 (PQEKEAIERLKALGFPEGLVIQAYFACEKNENLAANFLLQQ) folds into the UBA 2 domain.

The protein belongs to the RAD23 family. In terms of assembly, component of the XPC complex composed of XPC, RAD23B and CETN2. Interacts with NGLY1 and PSMC1. Interacts with ATXN3. Interacts with AMFR. Interacts with VCP; the interaction is indirect and mediated by NGLY1.

It is found in the nucleus. The protein localises to the cytoplasm. Functionally, multiubiquitin chain receptor involved in modulation of proteasomal degradation. Binds to polyubiquitin chains. Proposed to be capable to bind simultaneously to the 26S proteasome and to polyubiquitinated substrates and to deliver ubiquitinated proteins to the proteasome. May play a role in endoplasmic reticulum-associated degradation (ERAD) of misfolded glycoproteins by association with PNGase and delivering deglycosylated proteins to the proteasome. Involved in global genome nucleotide excision repair (GG-NER) by acting as component of the XPC complex. Cooperatively with Cetn2 appears to stabilize Xpc. May protect Xpc from proteasomal degradation. Its function is as follows. The XPC complex is proposed to represent the first factor bound at the sites of DNA damage and together with other core recognition factors, Xpa, RPA and the TFIIH complex, is part of the pre-incision (or initial recognition) complex. The XPC complex recognizes a wide spectrum of damaged DNA characterized by distortions of the DNA helix such as single-stranded loops, mismatched bubbles or single-stranded overhangs. The orientation of XPC complex binding appears to be crucial for inducing a productive NER. XPC complex is proposed to recognize and to interact with unpaired bases on the undamaged DNA strand which is followed by recruitment of the TFIIH complex and subsequent scanning for lesions in the opposite strand in a 5'-to-3' direction by the NER machinery. Cyclobutane pyrimidine dimers (CPDs) which are formed upon UV-induced DNA damage esacpe detection by the XPC complex due to a low degree of structural perurbation. Instead they are detected by the UV-DDB complex which in turn recruits and cooperates with the XPC complex in the respective DNA repair. In vitro, the XPC:RAD23B dimer is sufficient to initiate NER; it preferentially binds to cisplatin and UV-damaged double-stranded DNA and also binds to a variety of chemically and structurally diverse DNA adducts. XPC:RAD23B contacts DNA both 5' and 3' of a cisplatin lesion with a preference for the 5' side. Xpc:Rad22b induces a bend in DNA upon binding. Xpc:Rad23b stimulates the activity of DNA glycosylases Tdg and Smug1. In Rattus norvegicus (Rat), this protein is UV excision repair protein RAD23 homolog B (Rad23b).